The following is a 478-amino-acid chain: Cytochrome c biogenesis protein CcsB (478 aa).

3 helical membrane-spanning segments follow: residues 30 to 50 (LRLA…GTVI), 89 to 109 (TSWF…CSLT), and 175 to 195 (FGPI…IWGS). Residues 453-478 (LSSPPSPAKEPPPAARVGGTESLANG) form a disordered region. Residues 456 to 466 (PPSPAKEPPPA) are compositionally biased toward pro residues.

It belongs to the Ccs1/CcsB family. May interact with CcsA.

It localises to the cellular thylakoid membrane. In terms of biological role, required during biogenesis of c-type cytochromes (cytochrome c6 and cytochrome f) at the step of heme attachment. In Synechococcus sp. (strain JA-3-3Ab) (Cyanobacteria bacterium Yellowstone A-Prime), this protein is Cytochrome c biogenesis protein CcsB.